We begin with the raw amino-acid sequence, 303 residues long: Tyrosine recombinase XerC (303 aa).

In terms of domain architecture, Core-binding (CB) spans 1-85; sequence MRADLDAFLE…ATRGLYQYLL (85 aa). The Tyr recombinase domain maps to 106–285; it reads KLPRTLDADR…DFQHLASVYD (180 aa). Residues arginine 146, lysine 170, histidine 237, arginine 240, and histidine 263 contribute to the active site. Tyrosine 272 (O-(3'-phospho-DNA)-tyrosine intermediate) is an active-site residue.

This sequence belongs to the 'phage' integrase family. XerC subfamily. In terms of assembly, forms a cyclic heterotetrameric complex composed of two molecules of XerC and two molecules of XerD.

It localises to the cytoplasm. Functionally, site-specific tyrosine recombinase, which acts by catalyzing the cutting and rejoining of the recombining DNA molecules. The XerC-XerD complex is essential to convert dimers of the bacterial chromosome into monomers to permit their segregation at cell division. It also contributes to the segregational stability of plasmids. The polypeptide is Tyrosine recombinase XerC (Pseudomonas aeruginosa (strain LESB58)).